The sequence spans 324 residues: Homoserine kinase (324 aa).

100–110 (PLSSGMGSSAA) contacts ATP.

This sequence belongs to the GHMP kinase family. Homoserine kinase subfamily.

Its subcellular location is the cytoplasm. The enzyme catalyses L-homoserine + ATP = O-phospho-L-homoserine + ADP + H(+). The protein operates within amino-acid biosynthesis; L-threonine biosynthesis; L-threonine from L-aspartate: step 4/5. In terms of biological role, catalyzes the ATP-dependent phosphorylation of L-homoserine to L-homoserine phosphate. This is Homoserine kinase from Chlorobaculum tepidum (strain ATCC 49652 / DSM 12025 / NBRC 103806 / TLS) (Chlorobium tepidum).